The sequence spans 308 residues: Tetraacyldisaccharide 4'-kinase (308 aa).

63–70 contributes to the ATP binding site; sequence SFGGNGKT.

It belongs to the LpxK family.

It carries out the reaction a lipid A disaccharide + ATP = a lipid IVA + ADP + H(+). Its pathway is glycolipid biosynthesis; lipid IV(A) biosynthesis; lipid IV(A) from (3R)-3-hydroxytetradecanoyl-[acyl-carrier-protein] and UDP-N-acetyl-alpha-D-glucosamine: step 6/6. Its function is as follows. Transfers the gamma-phosphate of ATP to the 4'-position of a tetraacyldisaccharide 1-phosphate intermediate (termed DS-1-P) to form tetraacyldisaccharide 1,4'-bis-phosphate (lipid IVA). The chain is Tetraacyldisaccharide 4'-kinase from Campylobacter jejuni subsp. doylei (strain ATCC BAA-1458 / RM4099 / 269.97).